The following is a 237-amino-acid chain: DCN1-like protein 5 (237 aa).

Serine 41 carries the post-translational modification Phosphoserine; by IKKA. Residues 46-232 form the DCUN1 domain; that stretch reads FSRKKCLAWF…LLDEFVEWQK (187 aa).

In terms of assembly, part of a complex that contains DCUN1D5, CUL1 and RBX1; this interaction is bridged by CUL1. Interacts (via the DCUN1 domain) with the unneddylated cullins: interacts with CUL1, CUL2, CUL3, CUL4A, CUL4B and CUL5; these interactions promote the cullin neddylation and the identity of the cullin dictates the affinity of the interaction. Interacts (via DCUN1 domain) with UBE2M (N-terminally acetylated form) and probably with UBE2F (N-terminally acetylated form). May also interact with regulators or subunits of cullin-RING ligases such as RBX1, RNF7, ELOB and DDB1; these interactions are bridged by cullins. Interacts with CAND1; this interaction is bridged by cullins and strongly inhibits the neddylation of cullins. These CAND-cullin-DCNL complexes can only be neddylated in the presence of a substrate adapter. Post-translationally, phosphorylation at Ser-41 is independent of cullin's interaction. Phosphorylated in response to both TICAM1 and MYD88 dependent Toll-like receptor (TLR) pathway activation. Phosphorylated in response to IL1B stimulation. Highly expressed in testis. Lower levels of expression in skin, thymus, spleen, lymph nodes, lung, brain, heart, skeletal muscles, kidney, liver an ovary.

The protein localises to the nucleus. It is found in the cytoplasm. Its subcellular location is the cytoskeleton. It localises to the spindle. In terms of biological role, contributes to the neddylation of all cullins by transferring NEDD8 from N-terminally acetylated NEDD8-conjugating E2s enzyme to different cullin C-terminal domain-RBX complexes which is necessary for the activation of cullin-RING E3 ubiquitin ligases (CRLs). May play a role in DNA damage response and may participate in cell proliferation and anchorage-independent cell growth. The sequence is that of DCN1-like protein 5 from Mus musculus (Mouse).